The sequence spans 252 residues: Triosephosphate isomerase (252 aa).

9-11 (NWK) is a binding site for substrate. The Electrophile role is filled by His-95. Glu-167 functions as the Proton acceptor in the catalytic mechanism. Substrate contacts are provided by residues Gly-173, Ser-213, and 234–235 (GG).

It belongs to the triosephosphate isomerase family. Homodimer.

The protein resides in the cytoplasm. The catalysed reaction is D-glyceraldehyde 3-phosphate = dihydroxyacetone phosphate. It participates in carbohydrate biosynthesis; gluconeogenesis. Its pathway is carbohydrate degradation; glycolysis; D-glyceraldehyde 3-phosphate from glycerone phosphate: step 1/1. Its function is as follows. Involved in the gluconeogenesis. Catalyzes stereospecifically the conversion of dihydroxyacetone phosphate (DHAP) to D-glyceraldehyde-3-phosphate (G3P). In Lactiplantibacillus plantarum (strain ATCC BAA-793 / NCIMB 8826 / WCFS1) (Lactobacillus plantarum), this protein is Triosephosphate isomerase.